Here is a 204-residue protein sequence, read N- to C-terminus: Urease accessory protein UreG (204 aa).

Position 12–19 (Gly12–Thr19) interacts with GTP.

This sequence belongs to the SIMIBI class G3E GTPase family. UreG subfamily. In terms of assembly, homodimer. UreD, UreF and UreG form a complex that acts as a GTP-hydrolysis-dependent molecular chaperone, activating the urease apoprotein by helping to assemble the nickel containing metallocenter of UreC. The UreE protein probably delivers the nickel.

The protein resides in the cytoplasm. Its function is as follows. Facilitates the functional incorporation of the urease nickel metallocenter. This process requires GTP hydrolysis, probably effectuated by UreG. The protein is Urease accessory protein UreG of Stutzerimonas stutzeri (strain A1501) (Pseudomonas stutzeri).